A 283-amino-acid polypeptide reads, in one-letter code: Formamidopyrimidine-DNA glycosylase (283 aa).

Residue Pro2 is the Schiff-base intermediate with DNA of the active site. Glu3 functions as the Proton donor in the catalytic mechanism. Lys61 (proton donor; for beta-elimination activity) is an active-site residue. Residues His94, Arg113, and Lys159 each coordinate DNA. An FPG-type zinc finger spans residues Asp245–Pro279. Catalysis depends on Arg269, which acts as the Proton donor; for delta-elimination activity.

It belongs to the FPG family. As to quaternary structure, monomer. Zn(2+) is required as a cofactor.

It catalyses the reaction Hydrolysis of DNA containing ring-opened 7-methylguanine residues, releasing 2,6-diamino-4-hydroxy-5-(N-methyl)formamidopyrimidine.. The catalysed reaction is 2'-deoxyribonucleotide-(2'-deoxyribose 5'-phosphate)-2'-deoxyribonucleotide-DNA = a 3'-end 2'-deoxyribonucleotide-(2,3-dehydro-2,3-deoxyribose 5'-phosphate)-DNA + a 5'-end 5'-phospho-2'-deoxyribonucleoside-DNA + H(+). Functionally, involved in base excision repair of DNA damaged by oxidation or by mutagenic agents. Acts as a DNA glycosylase that recognizes and removes damaged bases. Has a preference for oxidized purines, such as 7,8-dihydro-8-oxoguanine (8-oxoG). Has AP (apurinic/apyrimidinic) lyase activity and introduces nicks in the DNA strand. Cleaves the DNA backbone by beta-delta elimination to generate a single-strand break at the site of the removed base with both 3'- and 5'-phosphates. This Mycobacterium avium (strain 104) protein is Formamidopyrimidine-DNA glycosylase.